The sequence spans 293 residues: Shikimate dehydrogenase (NADP(+)) (293 aa).

Shikimate is bound by residues 20-22 (SLT) and Thr72. Lys76 acts as the Proton acceptor in catalysis. Positions 97 and 112 each coordinate shikimate. Residues 136 to 140 (GAGGA) and Ile230 contribute to the NADP(+) site. Tyr232 serves as a coordination point for shikimate. Gly253 provides a ligand contact to NADP(+).

The protein belongs to the shikimate dehydrogenase family. Homodimer.

It carries out the reaction shikimate + NADP(+) = 3-dehydroshikimate + NADPH + H(+). Its pathway is metabolic intermediate biosynthesis; chorismate biosynthesis; chorismate from D-erythrose 4-phosphate and phosphoenolpyruvate: step 4/7. In terms of biological role, involved in the biosynthesis of the chorismate, which leads to the biosynthesis of aromatic amino acids. Catalyzes the reversible NADPH linked reduction of 3-dehydroshikimate (DHSA) to yield shikimate (SA). This chain is Shikimate dehydrogenase (NADP(+)), found in Arthrobacter sp. (strain FB24).